Reading from the N-terminus, the 133-residue chain is Profilin-3 (133 aa).

Cysteine 13 and cysteine 117 form a disulfide bridge. An Involved in PIP2 interaction motif is present at residues 83 to 99 (AVIRGKKGSGGITIKKT). Threonine 113 carries the phosphothreonine modification.

This sequence belongs to the profilin family. Occurs in many kinds of cells as a complex with monomeric actin in a 1:1 ratio. Phosphorylated by MAP kinases.

It localises to the cytoplasm. It is found in the cytoskeleton. In terms of biological role, binds to actin and affects the structure of the cytoskeleton. At high concentrations, profilin prevents the polymerization of actin, whereas it enhances it at low concentrations. The protein is Profilin-3 of Corylus avellana (European hazel).